A 957-amino-acid chain; its full sequence is ADAMTS-like protein 2 (957 aa).

The signal sequence occupies residues 1–29 (MDGRRQHPHWAWSLLAVAVVAGGAAPTEA). Positions 47-106 (AYWWGEWTKWTACSRSCGGGVTSQERHCLQQRRKSVPGTGNRTCVGTSKRYQLCRVQECP) constitute a TSP type-1 1 domain. Disulfide bonds link cysteine 59–cysteine 100, cysteine 63–cysteine 105, and cysteine 74–cysteine 90. Residues asparagine 87, asparagine 374, asparagine 435, asparagine 482, asparagine 518, asparagine 530, asparagine 539, and asparagine 550 are each glycosylated (N-linked (GlcNAc...) asparagine). Residues 532–544 (SSEAPFPNTSASP) are compositionally biased toward polar residues. The interval 532-568 (SSEAPFPNTSASPPNLAGNRTHKARTRPKARKQGVSP) is disordered. Over residues 551–563 (RTHKARTRPKARK) the composition is skewed to basic residues. TSP type-1 domains lie at 570-624 (DMYR…EFCA), 628-692 (CQPR…PACG), 694-742 (QWEM…TGPP), 743-801 (CDRQ…KNCP), 803-857 (HWLA…TCFE), and 859-914 (PCFK…QPCP). Residue asparagine 737 is glycosylated (N-linked (GlcNAc...) asparagine). N-linked (GlcNAc...) asparagine glycosylation occurs at asparagine 813. Residues 918 to 956 (PDDSCQDQPGTNCALAIKVNLCGHWYYSKACCRSCRPPH) enclose the PLAC domain.

As to quaternary structure, interacts with LTBP1. Post-translationally, glycosylated. Can be O-fucosylated by POFUT2 on a serine or a threonine residue found within the consensus sequence C1-X(2)-(S/T)-C2-G of the TSP type-1 repeat domains where C1 and C2 are the first and second cysteine residue of the repeat, respectively. Fucosylated repeats can then be further glycosylated by the addition of a beta-1,3-glucose residue by the glucosyltransferase, B3GALTL. Fucosylation mediates the efficient secretion of ADAMTS family members. Can also be C-glycosylated with one or two mannose molecules on tryptophan residues within the consensus sequence W-X-X-W of the TPRs, and N-glycosylated. These other glycosylations can also facilitate secretion.

Its subcellular location is the secreted. In Mus musculus (Mouse), this protein is ADAMTS-like protein 2 (Adamtsl2).